Reading from the N-terminus, the 130-residue chain is Large ribosomal subunit protein eL34 (130 aa).

A disordered region spans residues 111–130; the sequence is KPVSKPPKIQKTAKAASKSK.

Belongs to the eukaryotic ribosomal protein eL34 family.

This is Large ribosomal subunit protein eL34 (RpL34) from Aedes albopictus (Asian tiger mosquito).